The primary structure comprises 223 residues: Voltage-dependent calcium channel gamma-1 subunit (223 aa).

At 1-10 (MSQTKTAKVR) the chain is on the cytoplasmic side. The chain crosses the membrane as a helical span at residues 11–29 (VTLFFILVGGVLAMVAVVT). The Extracellular portion of the chain corresponds to 30 to 109 (DHWAVLSPHL…TQKEYSISAA (80 aa)). 2 N-linked (GlcNAc...) asparagine glycosylation sites follow: N43 and N80. The cysteines at positions 57 and 81 are disulfide-linked. Residues 110–130 (AIAIFSLGFIIVGSICAFLSF) traverse the membrane as a helical segment. At 131 to 135 (GNKRD) the chain is on the cytoplasmic side. The helical transmembrane segment at 136–156 (YLLRPASMFYAFAGLCLIVSV) threads the bilayer. At 157–180 (EVMRQSVKRMIDSEDTVWIEHYYS) the chain is on the extracellular side. The chain crosses the membrane as a helical span at residues 181-205 (WSFACACAAFILLFLGGLFLLLFSL). At 206 to 223 (PRMPQNPWESCMDAEPEH) the chain is on the cytoplasmic side.

Belongs to the PMP-22/EMP/MP20 family. CACNG subfamily. Component of a calcium channel complex consisting of a pore-forming alpha subunit (CACNA1S) and the ancillary subunits CACNB1 or CACNB2, CACNG1 and CACNA2D1. The channel complex contains alpha, beta, gamma and delta subunits in a 1:1:1:1 ratio, i.e. it contains either CACNB1 or CACNB2. N-glycosylated. In terms of tissue distribution, detected in skeletal muscle (at protein level).

The protein resides in the cell membrane. The protein localises to the sarcolemma. In terms of biological role, regulatory subunit of the voltage-gated calcium channel that gives rise to L-type calcium currents in skeletal muscle. Regulates channel inactivation kinetics. This chain is Voltage-dependent calcium channel gamma-1 subunit (Cacng1), found in Mus musculus (Mouse).